A 140-amino-acid polypeptide reads, in one-letter code: Large ribosomal subunit protein bL17 (140 aa).

Belongs to the bacterial ribosomal protein bL17 family. Part of the 50S ribosomal subunit. Contacts protein L32.

The sequence is that of Large ribosomal subunit protein bL17 from Rhizobium leguminosarum bv. trifolii (strain WSM2304).